Here is a 256-residue protein sequence, read N- to C-terminus: MLFYGTELKSRLMLGTAQYPSPEILSDAVRAAEAGVVTVSLRRESAGQRAGQAFWSMIRDLGVPVLPNTAGCHTVKEAVTTAHMAREVFDTDWIKLEVIGESDTLQPDMFGLVEAARILSRDGFKVFPYMTEDLVGAERLLQAGCEVLMPWGAPIGSGKGLNNVFGLRALRAHFPDVPLVVDAGIGLPSHAAQAMELGYDAVLINTAVAKAGDPVRMARAFRLAVEAGLIAREADPIEERDMAAPSTPVLGRAMLA.

Residue Lys95 is the Schiff-base intermediate with DXP of the active site. 1-deoxy-D-xylulose 5-phosphate contacts are provided by residues Gly156, Ala183 to Gly184, and Asn205 to Thr206.

Belongs to the ThiG family. In terms of assembly, homotetramer. Forms heterodimers with either ThiH or ThiS.

The protein resides in the cytoplasm. The catalysed reaction is [ThiS sulfur-carrier protein]-C-terminal-Gly-aminoethanethioate + 2-iminoacetate + 1-deoxy-D-xylulose 5-phosphate = [ThiS sulfur-carrier protein]-C-terminal Gly-Gly + 2-[(2R,5Z)-2-carboxy-4-methylthiazol-5(2H)-ylidene]ethyl phosphate + 2 H2O + H(+). The protein operates within cofactor biosynthesis; thiamine diphosphate biosynthesis. In terms of biological role, catalyzes the rearrangement of 1-deoxy-D-xylulose 5-phosphate (DXP) to produce the thiazole phosphate moiety of thiamine. Sulfur is provided by the thiocarboxylate moiety of the carrier protein ThiS. In vitro, sulfur can be provided by H(2)S. The sequence is that of Thiazole synthase from Gluconacetobacter diazotrophicus (strain ATCC 49037 / DSM 5601 / CCUG 37298 / CIP 103539 / LMG 7603 / PAl5).